The sequence spans 653 residues: 2-oxoglutarate oxidoreductase subunit KorA (653 aa).

Positions 1-21 (MDPNGSGAGPESHDAAFHAAP) are disordered. Over residues 11–21 (ESHDAAFHAAP) the composition is skewed to basic and acidic residues.

As to quaternary structure, KG oxidoreductase (KOR) is composed of KorA and KorB subunits.

It catalyses the reaction 2 oxidized [2Fe-2S]-[ferredoxin] + 2-oxoglutarate + CoA = succinyl-CoA + 2 reduced [2Fe-2S]-[ferredoxin] + CO2 + H(+). Its pathway is carbohydrate metabolism; tricarboxylic acid cycle. Its function is as follows. Component of KG oxidoreductase (KOR) that catalyzes the CoA-dependent oxidative decarboxylation of 2-oxoglutarate (alpha-ketoglutarate, KG) to succinyl-CoA. Methyl viologen can act as electron acceptor in vitro; the physiologic electron acceptor is unknown. Is involved in the alternative TCA pathway that functions concurrently with fatty acid beta-oxidation. Since a growing body of evidence indicates that lipids (for example cholesterol and fatty acids) are a predominant growth substrate for M.tuberculosis during infection, flux through KOR likely represents an important step in intermediary metabolism in vivo. KOR-dependent decarboxylation of KG also appears to be an important source of CO(2) in M.tuberculosis metabolism. In Mycobacterium tuberculosis (strain ATCC 25618 / H37Rv), this protein is 2-oxoglutarate oxidoreductase subunit KorA (korA).